Reading from the N-terminus, the 198-residue chain is Nucleoid occlusion factor SlmA (198 aa).

The region spanning 11 to 71 is the HTH tetR-type domain; it reads PNRKHQILES…GLIDFIEESI (61 aa). Residues 34-53 constitute a DNA-binding region (H-T-H motif); it reads TTAKLAAEVGFSEAALYRHF.

This sequence belongs to the nucleoid occlusion factor SlmA family. In terms of assembly, homodimer. Interacts with FtsZ.

It is found in the cytoplasm. Its subcellular location is the nucleoid. Required for nucleoid occlusion (NO) phenomenon, which prevents Z-ring formation and cell division over the nucleoid. Acts as a DNA-associated cell division inhibitor that binds simultaneously chromosomal DNA and FtsZ, and disrupts the assembly of FtsZ polymers. SlmA-DNA-binding sequences (SBS) are dispersed on non-Ter regions of the chromosome, preventing FtsZ polymerization at these regions. This chain is Nucleoid occlusion factor SlmA, found in Colwellia psychrerythraea (strain 34H / ATCC BAA-681) (Vibrio psychroerythus).